A 591-amino-acid chain; its full sequence is MMRSHYCGQLNESLDGQEVTLCGWVHRRRDHGGVIFLDIRDREGMAQVVFDPDRAETFAAADRVRSEYVVQITGKVRKRPDGAVNANMASGAIEILGYQLNVLNEAETPPFPLNEYSDVGEETRLRYRFIDLRRPEMADKLRLRSRITSSIRRFLDENGFLDVETPILTRATPEGARDYLVPSRTHAGSFFALPQSPQLFKQLLMVAGFDRYYQIAKCFRDEDLRADRQPEFTQIDIETSFLDESEIMGLTESMIRKLFKEVLDLEFGEFPHMTFEEAMRRYGSDKPDLRNPLELVDVADQLKDVDFKVFAGPANDPKCRVTALRLPGGASMPRSKIDEYTKFVGIYGAKGLAYIKVNERAKGVEGLQSPIVKNIPEANLNNILDRVGAVDGDIVFFGADKFKVVSEALGALRIRLGHDFELLTCEWAPMWVVDFPMFEENEDGSFTALHHPFTAPKCTPEELEANPATALSRAYDMVLNGTELGGGSIRIHRKEMQQAVFRLLGIEAEEQEEKFGFLLDALKFGAPPHGGLAFGLDRLVMLMTGAQSIREVIAFPKTQSAACVMTQAPGLVDAKALRELHIRLREQTKVE.

Glutamate 174 contacts L-aspartate. Residues 198–201 (QLFK) are aspartate. Arginine 220 contributes to the L-aspartate binding site. Residues 220–222 (RDE) and glutamine 229 contribute to the ATP site. Residue histidine 450 participates in L-aspartate binding. Glutamate 483 is a binding site for ATP. Arginine 490 provides a ligand contact to L-aspartate. 535 to 538 (GLDR) serves as a coordination point for ATP.

Belongs to the class-II aminoacyl-tRNA synthetase family. Type 1 subfamily. As to quaternary structure, homodimer.

The protein localises to the cytoplasm. The catalysed reaction is tRNA(Asx) + L-aspartate + ATP = L-aspartyl-tRNA(Asx) + AMP + diphosphate. In terms of biological role, aspartyl-tRNA synthetase with relaxed tRNA specificity since it is able to aspartylate not only its cognate tRNA(Asp) but also tRNA(Asn). Reaction proceeds in two steps: L-aspartate is first activated by ATP to form Asp-AMP and then transferred to the acceptor end of tRNA(Asp/Asn). The sequence is that of Aspartate--tRNA(Asp/Asn) ligase from Pseudomonas putida (strain GB-1).